The chain runs to 352 residues: tRNA pseudouridine synthase D (352 aa).

The Nucleophile role is filled by D81. Residues 157-303 enclose the TRUD domain; that stretch reads GVPNYFGTQR…MDHERRILRL (147 aa).

The protein belongs to the pseudouridine synthase TruD family.

It catalyses the reaction uridine(13) in tRNA = pseudouridine(13) in tRNA. Functionally, responsible for synthesis of pseudouridine from uracil-13 in transfer RNAs. The protein is tRNA pseudouridine synthase D of Pseudomonas putida (strain GB-1).